Here is a 122-residue protein sequence, read N- to C-terminus: MIQPQTYLNVADNSGARKLMCIRVIGTSNRKYANIGDIIIAVVKEAVPNMPIKKSEIVRAVIVRTCKEFKRNNGSIIKFDDNAAVVINQEGNPKGTRVFGPIARELRESNFTKIVSLAPEVL.

This sequence belongs to the universal ribosomal protein uL14 family. In terms of assembly, part of the 50S ribosomal subunit.

The protein localises to the plastid. It localises to the chloroplast. Functionally, binds to 23S rRNA. The polypeptide is Large ribosomal subunit protein uL14c (Marchantia polymorpha (Common liverwort)).